The sequence spans 525 residues: MTQARRPLMLIIFDGWGYREAKEGNAVMTARTPNLDRLEKECPWCFLKASGEAVGLPKGMMGNSEVGHLTIGAGRIVNQDLTRINISIKNGDFFKNPVFLNAISNVKANASSLHLMGLASCGGIHSYMPHLHALLKLVQEKDLKKVYIHAFLDGRDEPPKAALGDIKKLDAFCKEHGNAKIATVSGRYYAMDRDKRWDRTKLAYDALTRGVAPYTAPNAETAVSNAYSRGETDEFVKPTIITEQVITEQVITEQAEKPVATVQDNDSVIFFNFRADRARQITWAFVKDDFDGFMREKRPEVYFVCMTQYDETLEVPIAFPPIKLENVLGEVLSKHGLIQLRIAETEKYAHVTYFLNGGEEKRYKDEDRCLIPSPKIATYDLKPEMSAYEITDEVIRRIQSGKYDVIVLNFANMDMVGHTGIFEAAVKAVEAVDKCIGRIVEVLKEKGGVALITADHGNAEEMIDLKTGEPHTAHTSNPVKCIYFGNSEIKALRNGKLCDVAPTILELLGIPKPQEMTGKSLLVKD.

Mn(2+)-binding residues include Asp14 and Ser64. The active-site Phosphoserine intermediate is Ser64. Substrate is bound by residues His125, 155 to 156 (RD), Arg187, Arg193, 274 to 277 (RADR), and Lys347. The Mn(2+) site is built by Asp414, His418, Asp455, His456, and His474.

This sequence belongs to the BPG-independent phosphoglycerate mutase family. Requires Mn(2+) as cofactor.

The catalysed reaction is (2R)-2-phosphoglycerate = (2R)-3-phosphoglycerate. It functions in the pathway carbohydrate degradation; glycolysis; pyruvate from D-glyceraldehyde 3-phosphate: step 3/5. Functionally, catalyzes the interconversion of 2-phosphoglycerate and 3-phosphoglycerate. In Methanosarcina barkeri (strain Fusaro / DSM 804), this protein is 2,3-bisphosphoglycerate-independent phosphoglycerate mutase 2.